The chain runs to 143 residues: Large ribosomal subunit protein uL11 (143 aa).

Belongs to the universal ribosomal protein uL11 family. As to quaternary structure, part of the ribosomal stalk of the 50S ribosomal subunit. Interacts with L10 and the large rRNA to form the base of the stalk. L10 forms an elongated spine to which L12 dimers bind in a sequential fashion forming a multimeric L10(L12)X complex. In terms of processing, one or more lysine residues are methylated.

Functionally, forms part of the ribosomal stalk which helps the ribosome interact with GTP-bound translation factors. The sequence is that of Large ribosomal subunit protein uL11 from Stutzerimonas stutzeri (strain A1501) (Pseudomonas stutzeri).